A 396-amino-acid polypeptide reads, in one-letter code: Ribosomal RNA large subunit methyltransferase I (396 aa).

The PUA domain occupies 2–81 (SVRLVLTKGR…ETIDIAFFTR (80 aa)).

It belongs to the methyltransferase superfamily. RlmI family.

The protein resides in the cytoplasm. The enzyme catalyses cytidine(1962) in 23S rRNA + S-adenosyl-L-methionine = 5-methylcytidine(1962) in 23S rRNA + S-adenosyl-L-homocysteine + H(+). Functionally, specifically methylates the cytosine at position 1962 (m5C1962) of 23S rRNA. In Enterobacter sp. (strain 638), this protein is Ribosomal RNA large subunit methyltransferase I.